The following is a 372-amino-acid chain: Queuine tRNA-ribosyltransferase (372 aa).

The active-site Proton acceptor is aspartate 92. Residues 92–96 (DSGGY), aspartate 146, glutamine 188, and glycine 215 contribute to the substrate site. An RNA binding region spans residues 246 to 252 (GIGSLKE). The Nucleophile role is filled by aspartate 265. The interval 270-274 (TRLGR) is RNA binding; important for wobble base 34 recognition. Zn(2+) contacts are provided by cysteine 303, cysteine 305, cysteine 308, and histidine 334.

This sequence belongs to the queuine tRNA-ribosyltransferase family. As to quaternary structure, homodimer. Within each dimer, one monomer is responsible for RNA recognition and catalysis, while the other monomer binds to the replacement base PreQ1. Zn(2+) serves as cofactor.

It catalyses the reaction 7-aminomethyl-7-carbaguanine + guanosine(34) in tRNA = 7-aminomethyl-7-carbaguanosine(34) in tRNA + guanine. Its pathway is tRNA modification; tRNA-queuosine biosynthesis. Functionally, catalyzes the base-exchange of a guanine (G) residue with the queuine precursor 7-aminomethyl-7-deazaguanine (PreQ1) at position 34 (anticodon wobble position) in tRNAs with GU(N) anticodons (tRNA-Asp, -Asn, -His and -Tyr). Catalysis occurs through a double-displacement mechanism. The nucleophile active site attacks the C1' of nucleotide 34 to detach the guanine base from the RNA, forming a covalent enzyme-RNA intermediate. The proton acceptor active site deprotonates the incoming PreQ1, allowing a nucleophilic attack on the C1' of the ribose to form the product. After dissociation, two additional enzymatic reactions on the tRNA convert PreQ1 to queuine (Q), resulting in the hypermodified nucleoside queuosine (7-(((4,5-cis-dihydroxy-2-cyclopenten-1-yl)amino)methyl)-7-deazaguanosine). The sequence is that of Queuine tRNA-ribosyltransferase from Prochlorococcus marinus (strain AS9601).